Consider the following 217-residue polypeptide: Thiamine-phosphate synthase (217 aa).

Residues 39-43 (QYRDK) and N71 contribute to the 4-amino-2-methyl-5-(diphosphooxymethyl)pyrimidine site. 2 residues coordinate Mg(2+): D72 and D91. T110 contributes to the 4-amino-2-methyl-5-(diphosphooxymethyl)pyrimidine binding site. 2-[(2R,5Z)-2-carboxy-4-methylthiazol-5(2H)-ylidene]ethyl phosphate is bound at residue 137–139 (SNT). Position 140 (K140) interacts with 4-amino-2-methyl-5-(diphosphooxymethyl)pyrimidine. G167 contributes to the 2-[(2R,5Z)-2-carboxy-4-methylthiazol-5(2H)-ylidene]ethyl phosphate binding site.

This sequence belongs to the thiamine-phosphate synthase family. Mg(2+) is required as a cofactor.

The catalysed reaction is 2-[(2R,5Z)-2-carboxy-4-methylthiazol-5(2H)-ylidene]ethyl phosphate + 4-amino-2-methyl-5-(diphosphooxymethyl)pyrimidine + 2 H(+) = thiamine phosphate + CO2 + diphosphate. It catalyses the reaction 2-(2-carboxy-4-methylthiazol-5-yl)ethyl phosphate + 4-amino-2-methyl-5-(diphosphooxymethyl)pyrimidine + 2 H(+) = thiamine phosphate + CO2 + diphosphate. The enzyme catalyses 4-methyl-5-(2-phosphooxyethyl)-thiazole + 4-amino-2-methyl-5-(diphosphooxymethyl)pyrimidine + H(+) = thiamine phosphate + diphosphate. Its pathway is cofactor biosynthesis; thiamine diphosphate biosynthesis; thiamine phosphate from 4-amino-2-methyl-5-diphosphomethylpyrimidine and 4-methyl-5-(2-phosphoethyl)-thiazole: step 1/1. Functionally, condenses 4-methyl-5-(beta-hydroxyethyl)thiazole monophosphate (THZ-P) and 2-methyl-4-amino-5-hydroxymethyl pyrimidine pyrophosphate (HMP-PP) to form thiamine monophosphate (TMP). The chain is Thiamine-phosphate synthase from Saccharophagus degradans (strain 2-40 / ATCC 43961 / DSM 17024).